Reading from the N-terminus, the 229-residue chain is Aspartate-rich protein 1 (229 aa).

The disordered stretch occupies residues 84–106 (SEEDNDDAKILPSPVQGSSEDNL).

In Homo sapiens (Human), this protein is Aspartate-rich protein 1 (DRICH1).